An 814-amino-acid chain; its full sequence is Acyl-coenzyme A dehydrogenase (814 aa).

E497 acts as the Proton acceptor in catalysis.

This sequence belongs to the acyl-CoA dehydrogenase family. FAD is required as a cofactor.

The enzyme catalyses a medium-chain 2,3-saturated fatty acyl-CoA + oxidized [electron-transfer flavoprotein] + H(+) = a medium-chain (2E)-enoyl-CoA + reduced [electron-transfer flavoprotein]. The catalysed reaction is a long-chain 2,3-saturated fatty acyl-CoA + oxidized [electron-transfer flavoprotein] + H(+) = a long-chain (2E)-enoyl-CoA + reduced [electron-transfer flavoprotein]. Its pathway is lipid metabolism; fatty acid beta-oxidation. Its function is as follows. Catalyzes the dehydrogenation of acyl-coenzymes A (acyl-CoAs) to 2-enoyl-CoAs, the first step of the beta-oxidation cycle of fatty acid degradation. Is required for E.coli to utilize dodecanoate or oleate as the sole carbon and energy source for growth. The polypeptide is Acyl-coenzyme A dehydrogenase (Escherichia coli (strain K12)).